Here is a 215-residue protein sequence, read N- to C-terminus: Thiamine-phosphate synthase 1 (215 aa).

Residues 35–39 and Asn-67 each bind 4-amino-2-methyl-5-(diphosphooxymethyl)pyrimidine; that span reads QYRFE. Mg(2+) contacts are provided by Asp-68 and Asp-87. Residue Thr-106 participates in 4-amino-2-methyl-5-(diphosphooxymethyl)pyrimidine binding. 132-134 contributes to the 2-[(2R,5Z)-2-carboxy-4-methylthiazol-5(2H)-ylidene]ethyl phosphate binding site; sequence TST. Lys-135 serves as a coordination point for 4-amino-2-methyl-5-(diphosphooxymethyl)pyrimidine. Gly-162 provides a ligand contact to 2-[(2R,5Z)-2-carboxy-4-methylthiazol-5(2H)-ylidene]ethyl phosphate.

The protein belongs to the thiamine-phosphate synthase family. The cofactor is Mg(2+).

It catalyses the reaction 2-[(2R,5Z)-2-carboxy-4-methylthiazol-5(2H)-ylidene]ethyl phosphate + 4-amino-2-methyl-5-(diphosphooxymethyl)pyrimidine + 2 H(+) = thiamine phosphate + CO2 + diphosphate. It carries out the reaction 2-(2-carboxy-4-methylthiazol-5-yl)ethyl phosphate + 4-amino-2-methyl-5-(diphosphooxymethyl)pyrimidine + 2 H(+) = thiamine phosphate + CO2 + diphosphate. The enzyme catalyses 4-methyl-5-(2-phosphooxyethyl)-thiazole + 4-amino-2-methyl-5-(diphosphooxymethyl)pyrimidine + H(+) = thiamine phosphate + diphosphate. The protein operates within cofactor biosynthesis; thiamine diphosphate biosynthesis; thiamine phosphate from 4-amino-2-methyl-5-diphosphomethylpyrimidine and 4-methyl-5-(2-phosphoethyl)-thiazole: step 1/1. Functionally, condenses 4-methyl-5-(beta-hydroxyethyl)thiazole monophosphate (THZ-P) and 2-methyl-4-amino-5-hydroxymethyl pyrimidine pyrophosphate (HMP-PP) to form thiamine monophosphate (TMP). The protein is Thiamine-phosphate synthase 1 of Aquifex aeolicus (strain VF5).